We begin with the raw amino-acid sequence, 128 residues long: 3-aminoacrylate deaminase RutC (128 aa).

This sequence belongs to the RutC family.

The catalysed reaction is (Z)-3-aminoacrylate + H2O + H(+) = 3-oxopropanoate + NH4(+). Functionally, involved in pyrimidine catabolism. Catalyzes the deamination of 3-aminoacrylate to malonic semialdehyde, a reaction that can also occur spontaneously. RutC may facilitate the reaction and modulate the metabolic fitness, rather than catalyzing essential functions. This Agrobacterium fabrum (strain C58 / ATCC 33970) (Agrobacterium tumefaciens (strain C58)) protein is 3-aminoacrylate deaminase RutC.